A 646-amino-acid polypeptide reads, in one-letter code: NADP-dependent malic enzyme 4, chloroplastic (646 aa).

The N-terminal 74 residues, 1 to 74 (MISLTPSLFL…LETSAADIVP (74 aa)), are a transit peptide targeting the chloroplast. The Proton donor role is filled by Tyr194. Arg247 serves as a coordination point for NADP(+). Catalysis depends on Lys265, which acts as the Proton acceptor. The a divalent metal cation site is built by Glu337, Asp338, and Asp361. NADP(+) is bound by residues Asp361, 390 to 406 (LFLG…ELIA), and Asn502.

The protein belongs to the malic enzymes family. As to quaternary structure, homodimer and homotetramer. Mg(2+) serves as cofactor. It depends on Mn(2+) as a cofactor. Expressed in leaves, stems, flowers and roots, mainly in vascular system. In roots, present in the stele, including the vascular tissue and the pericycle, mainly at emerging lateral roots and at root tips.

It localises to the plastid. The protein resides in the chloroplast. The catalysed reaction is (S)-malate + NADP(+) = pyruvate + CO2 + NADPH. It carries out the reaction oxaloacetate + H(+) = pyruvate + CO2. It functions in the pathway photosynthesis; C3 acid pathway. In terms of biological role, the chloroplastic ME isoform decarboxylates malate shuttled from neighboring mesophyll cells. The CO(2) released is then refixed by ribulose-bisphosphate carboxylase. This pathway eliminates the photorespiratory loss of CO(2) that occurs in most plants. In Arabidopsis thaliana (Mouse-ear cress), this protein is NADP-dependent malic enzyme 4, chloroplastic (NADP-ME4).